The primary structure comprises 702 residues: Antigen peptide transporter 2 (702 aa).

Over 1–6 (MALSYL) the chain is Lumenal. Residues 7 to 27 (RPWVSLLLADMALLGLLQGSL) form a helical membrane-spanning segment. Residues 28–56 (GNLLPQGLPGLWIEGTLRLGVLWGLLKVG) are Cytoplasmic-facing. The chain crosses the membrane as a helical span at residues 57-77 (ELLGLVGTLLPLLCLATPLFF). The Lumenal segment spans residues 78–98 (SLRALVGGTASTSVVRVASAS). A helical membrane pass occupies residues 99–119 (WGWLLAGYGAVALSWAVWAVL). Over 120–147 (SPAGVQEKEPGQENRTLMKRLLKLSRPD) the chain is Cytoplasmic. The chain crosses the membrane as a helical span at residues 148-168 (LPFLIAAFFFLVVAVWGETLI). An ABC transmembrane type-1 domain is found at 151–434 (LIAAFFFLVV…LVYMYGDMLS (284 aa)). Residues 169-186 (PRYSGRVIDILGGDFDPD) are Lumenal-facing. Residues 187–207 (AFASAIFFMCLFSVGSSFSAG) form a helical membrane-spanning segment. Topologically, residues 208-265 (CRGGSFLFTMSRINLRIREQLFSSLLRQDLGFFQETKTGELNSRLSSDTSLMSRWLPF) are cytoplasmic. The helical transmembrane segment at 266 to 286 (NANILLRSLVKVVGLYFFMLQ) threads the bilayer. The Lumenal portion of the chain corresponds to 287–292 (VSPRLT). Residues 293-313 (FLSLLDLPLTIAAEKVYNPRH) traverse the membrane as a helical segment. The segment at 300–388 (PLTIAAEKVY…RRVMALGMQV (89 aa)) is part of the peptide-binding site. At 314–373 (QAVLKEIQDAVAKAGQVVREAVGGLQTVRSFGAEEQEVSHYKEALERCRQLWWRRDLEKD) the chain is on the cytoplasmic side. The helical transmembrane segment at 374–394 (VYLVIRRVMALGMQVLILNCG) threads the bilayer. Topologically, residues 395 to 407 (VQQILAGEVTRGG) are lumenal. The chain crosses the membrane as a helical span at residues 408 to 428 (LLSFLLYQEEVGQYVRNLVYM). A part of the peptide-binding site region spans residues 413–432 (LYQEEVGQYVRNLVYMYGDM). Residues 429-702 (YGDMLSNVGA…AHLVQQRLEA (274 aa)) lie on the Cytoplasmic side of the membrane. The 235-residue stretch at 467 to 701 (VEFQDVSFSY…YAHLVQQRLE (235 aa)) folds into the ABC transporter domain. 502-509 (GPNGSGKS) contributes to the ATP binding site.

The protein belongs to the ABC transporter superfamily. ABCB family. MHC peptide exporter (TC 3.A.1.209) subfamily. As to quaternary structure, heterodimer of TAP1 and TAP2 (TAP1-TAP2). A component of the peptide loading complex (PLC), interacts via TAPBP with MHCI heterodimer; this interaction mediates peptide-MHCI assembly. The cofactor is Mg(2+).

The protein localises to the endoplasmic reticulum membrane. It catalyses the reaction a peptide antigen(in) + ATP + H2O = a peptide antigen(out) + ADP + phosphate + H(+). Its function is as follows. ABC transporter associated with antigen processing. In complex with TAP1 mediates unidirectional translocation of peptide antigens from cytosol to endoplasmic reticulum (ER) for loading onto MHC class I (MHCI) molecules. Uses the chemical energy of ATP to export peptides against the concentration gradient. During the transport cycle alternates between 'inward-facing' state with peptide binding site facing the cytosol to 'outward-facing' state with peptide binding site facing the ER lumen. Peptide antigen binding to ATP-loaded TAP1-TAP2 induces a switch to hydrolysis-competent 'outward-facing' conformation ready for peptide loading onto nascent MHCI molecules. Subsequently ATP hydrolysis resets the transporter to the 'inward facing' state for a new cycle. As a component of the peptide loading complex (PLC), acts as a molecular scaffold essential for peptide-MHCI assembly and antigen presentation. This chain is Antigen peptide transporter 2 (Tap2), found in Mus musculus (Mouse).